Here is a 351-residue protein sequence, read N- to C-terminus: Dihydroorotate dehydrogenase (quinone) (351 aa).

Residues 67–71 (AGFDK) and threonine 91 contribute to the FMN site. Position 71 (lysine 71) interacts with substrate. 116–120 (NAMGF) contacts substrate. Residues asparagine 145 and asparagine 178 each coordinate FMN. Residue asparagine 178 participates in substrate binding. Catalysis depends on serine 181, which acts as the Nucleophile. Asparagine 183 contributes to the substrate binding site. Lysine 214 and threonine 242 together coordinate FMN. 243 to 244 (NT) contacts substrate. Residues glycine 262, glycine 291, and 312–313 (YT) contribute to the FMN site.

This sequence belongs to the dihydroorotate dehydrogenase family. Type 2 subfamily. Monomer. FMN is required as a cofactor.

Its subcellular location is the cell membrane. The enzyme catalyses (S)-dihydroorotate + a quinone = orotate + a quinol. It functions in the pathway pyrimidine metabolism; UMP biosynthesis via de novo pathway; orotate from (S)-dihydroorotate (quinone route): step 1/1. Its function is as follows. Catalyzes the conversion of dihydroorotate to orotate with quinone as electron acceptor. The sequence is that of Dihydroorotate dehydrogenase (quinone) from Nitratiruptor sp. (strain SB155-2).